The chain runs to 225 residues: Enolase-phosphatase E1 (225 aa).

The protein belongs to the HAD-like hydrolase superfamily. MasA/MtnC family. Monomer. Mg(2+) is required as a cofactor.

It carries out the reaction 5-methylsulfanyl-2,3-dioxopentyl phosphate + H2O = 1,2-dihydroxy-5-(methylsulfanyl)pent-1-en-3-one + phosphate. Its pathway is amino-acid biosynthesis; L-methionine biosynthesis via salvage pathway; L-methionine from S-methyl-5-thio-alpha-D-ribose 1-phosphate: step 3/6. It participates in amino-acid biosynthesis; L-methionine biosynthesis via salvage pathway; L-methionine from S-methyl-5-thio-alpha-D-ribose 1-phosphate: step 4/6. Bifunctional enzyme that catalyzes the enolization of 2,3-diketo-5-methylthiopentyl-1-phosphate (DK-MTP-1-P) into the intermediate 2-hydroxy-3-keto-5-methylthiopentenyl-1-phosphate (HK-MTPenyl-1-P), which is then dephosphorylated to form the acireductone 1,2-dihydroxy-3-keto-5-methylthiopentene (DHK-MTPene). The sequence is that of Enolase-phosphatase E1 from Shewanella woodyi (strain ATCC 51908 / MS32).